Consider the following 397-residue polypeptide: MGWKTLDDMDLAGKVVLVRVDVNVPMEKGEVTDATRIEKIVPTVEDILKKGGKPVLLAHFGRPKGKVVDEMSLRLVLPALQKALPGTKVSFAPDCVGEEAEKAVAAMLEGEVLLLENTRFHAGEEKNDPELAAAMAKLGDVYVNDAFSAAHRAHSSTEGIARLLPSAAGRLMEAELKALDAALGQPERPVVAVVGGAKVSTKLDLLGNLVGRVDHLVIGGGMANTFLVAQGTEVGKSLAERDMAETAREIVAKAKAAGCTIHLPLDVVVAREFKAGAANETVEAGACPADAMILDAGPKTVAALSEVFASARTLIWNGPLGAFEIEPFDAATNAAALQVAQLTKAGQLISVAGGGDTVAALNKAGAAEGFSYISTAGGAFLEWMEGKELPGVAALNV.

Substrate-binding positions include 21–23 (DVN), arginine 36, 59–62 (HFGR), arginine 119, and arginine 152. ATP-binding positions include lysine 202, glutamate 324, and 354-357 (GGDT).

The protein belongs to the phosphoglycerate kinase family. In terms of assembly, monomer.

The protein localises to the cytoplasm. It carries out the reaction (2R)-3-phosphoglycerate + ATP = (2R)-3-phospho-glyceroyl phosphate + ADP. It functions in the pathway carbohydrate degradation; glycolysis; pyruvate from D-glyceraldehyde 3-phosphate: step 2/5. This Cereibacter sphaeroides (strain ATCC 17025 / ATH 2.4.3) (Rhodobacter sphaeroides) protein is Phosphoglycerate kinase.